The sequence spans 208 residues: UPF0637 protein Bcer98_2662 (208 aa).

This sequence belongs to the UPF0637 family.

The chain is UPF0637 protein Bcer98_2662 from Bacillus cytotoxicus (strain DSM 22905 / CIP 110041 / 391-98 / NVH 391-98).